A 244-amino-acid polypeptide reads, in one-letter code: Agamous-like MADS-box protein AGL13 (244 aa).

Residues 3–57 (RGKVEVKRIENKITRQVTFSKRKSGLLKKAYELSVLCDAEVSLIIFSTGGKLYEF) form the MADS-box domain. A K-box domain is found at 85 to 175 (TQGLRQEVTK…KLETEDHDFK (91 aa)).

It is found in the nucleus. Its function is as follows. Probable transcription factor. The protein is Agamous-like MADS-box protein AGL13 (AGL13) of Arabidopsis thaliana (Mouse-ear cress).